The following is a 160-amino-acid chain: Major pollen allergen Bet v 1-E (160 aa).

The brassinolide site is built by Lys55, Tyr82, Tyr84, and Asn101.

It belongs to the BetVI family.

Its subcellular location is the cytoplasm. In terms of biological role, may be a general steroid carrier protein. The polypeptide is Major pollen allergen Bet v 1-E (BETV1E) (Betula pendula (European white birch)).